A 1299-amino-acid polypeptide reads, in one-letter code: Phosphoribosylformylglycinamidine synthase (1299 aa).

ATP-binding positions include 310–321 (GAATGAGGEIRD), 389–391 (TGY), and A680. Mg(2+) is bound by residues D681, E720, N724, and D888. ATP is bound at residue S890. Residues 1046-1299 (VAVLREQGVN…MFRNARVWLG (254 aa)) enclose the Glutamine amidotransferase type-1 domain. Catalysis depends on C1139, which acts as the Nucleophile. Residues H1264 and E1266 contribute to the active site.

It in the N-terminal section; belongs to the FGAMS family. Monomer.

The protein resides in the cytoplasm. It carries out the reaction N(2)-formyl-N(1)-(5-phospho-beta-D-ribosyl)glycinamide + L-glutamine + ATP + H2O = 2-formamido-N(1)-(5-O-phospho-beta-D-ribosyl)acetamidine + L-glutamate + ADP + phosphate + H(+). The protein operates within purine metabolism; IMP biosynthesis via de novo pathway; 5-amino-1-(5-phospho-D-ribosyl)imidazole from N(2)-formyl-N(1)-(5-phospho-D-ribosyl)glycinamide: step 1/2. Phosphoribosylformylglycinamidine synthase involved in the purines biosynthetic pathway. Catalyzes the ATP-dependent conversion of formylglycinamide ribonucleotide (FGAR) and glutamine to yield formylglycinamidine ribonucleotide (FGAM) and glutamate. This chain is Phosphoribosylformylglycinamidine synthase, found in Myxococcus xanthus (strain DK1622).